We begin with the raw amino-acid sequence, 468 residues long: Monocarboxylate transporter 6 (468 aa).

Topologically, residues 1–13 are cytoplasmic; it reads MARALEQADGRWA. A helical membrane pass occupies residues 14-34; the sequence is WVVLLSSLVTQALTLGFPTCI. The Extracellular portion of the chain corresponds to 35–53; that stretch reads GVFFTDLQRDFQASNSETS. Residues 54-74 form a helical membrane-spanning segment; sequence WFPSILGAMVHGGGPLCSILV. The Cytoplasmic portion of the chain corresponds to 75 to 80; the sequence is KHFGCR. Residues 81–101 traverse the membrane as a helical segment; it reads VTMMLGGVLASLGMVVSTFSG. Residue Ser-102 is a topological domain, extracellular. Residues 103–122 traverse the membrane as a helical segment; that stretch reads LTHLFLTAGVITGLGMCFSF. Topologically, residues 123–138 are cytoplasmic; the sequence is QSSITVVGLYFVRRRP. A helical membrane pass occupies residues 139-159; the sequence is LANALASMGLSMGVTLWPLLA. The Extracellular segment spans residues 160 to 171; it reads RYLLETLGWRGA. The helical transmembrane segment at 172–192 threads the bilayer; sequence FLIFGGILLHCCVCGALLRPV. The Cytoplasmic segment spans residues 193–239; that stretch reads ATNEVPEPKEDPLLPPKIPTRSCLATCVSTIRYHLAFDILRHNMGFC. The helical transmembrane segment at 240–260 threads the bilayer; that stretch reads IYVTGVTWMNLGFALPHIFLV. Residues 261–274 lie on the Extracellular side of the membrane; that stretch reads PYAMHHGVDDYWAA. The chain crosses the membrane as a helical span at residues 275–295; that stretch reads MLMSIVGFCNIFLRPMAGLLL. Topologically, residues 296–306 are cytoplasmic; that stretch reads AGRKSLAAYRK. Residues 307–327 traverse the membrane as a helical segment; sequence YLFAVAILINGLTNLICTVSA. Residues 328–330 are Extracellular-facing; it reads DFR. Residues 331 to 351 traverse the membrane as a helical segment; the sequence is VLLGYCLVYSLSMCGVGILVF. The Cytoplasmic portion of the chain corresponds to 352 to 368; it reads QVLMDIVPMDRFPSALG. The helical transmembrane segment at 369–389 threads the bilayer; sequence LFTILCGVTSLISPPLAGLLL. Residues 390–396 are Extracellular-facing; sequence DKTNNFS. Residues 397 to 417 traverse the membrane as a helical segment; the sequence is YVFYMSSGFLVSGSLILGVGF. Topologically, residues 418 to 468 are cytoplasmic; it reads YAAEKKKLKQDGQAKMENATSEMTPMHDLTSEDKDSAKKQPYPESIYMTNV. The interval 429–468 is disordered; it reads GQAKMENATSEMTPMHDLTSEDKDSAKKQPYPESIYMTNV. Residues 446–455 are compositionally biased toward basic and acidic residues; the sequence is LTSEDKDSAK.

It belongs to the major facilitator superfamily. Monocarboxylate porter (TC 2.A.1.13) family.

Its subcellular location is the cell membrane. In terms of biological role, proton-linked monocarboxylate transporter. Catalyzes the rapid transport across the plasma membrane of many monocarboxylates such as lactate, pyruvate, branched-chain oxo acids derived from leucine, valine and isoleucine, and the ketone bodies acetoacetate, beta-hydroxybutyrate and acetate. The sequence is that of Monocarboxylate transporter 6 (Slc16a5) from Mus musculus (Mouse).